A 437-amino-acid polypeptide reads, in one-letter code: Elongation factor 1-alpha (437 aa).

The 226-residue stretch at 4–229 folds into the tr-type G domain; it reads KPHMNLVVIG…DQLQPPAKPV (226 aa). Positions 13–20 are G1; sequence GHVDHGKS. A GTP-binding site is contributed by 13-20; sequence GHVDHGKS. S20 is a Mg(2+) binding site. The tract at residues 69 to 73 is G2; it reads GITID. Positions 90 to 93 are G3; that stretch reads DAPG. GTP is bound by residues 90–94 and 152–155; these read DAPGH and NKMD. Residues 152-155 form a G4 region; that stretch reads NKMD. The G5 stretch occupies residues 193 to 195; the sequence is SAW.

It belongs to the TRAFAC class translation factor GTPase superfamily. Classic translation factor GTPase family. EF-Tu/EF-1A subfamily.

Its subcellular location is the cytoplasm. The catalysed reaction is GTP + H2O = GDP + phosphate + H(+). In terms of biological role, GTP hydrolase that promotes the GTP-dependent binding of aminoacyl-tRNA to the A-site of ribosomes during protein biosynthesis. This chain is Elongation factor 1-alpha, found in Aeropyrum pernix (strain ATCC 700893 / DSM 11879 / JCM 9820 / NBRC 100138 / K1).